The chain runs to 171 residues: Glucagon family neuropeptides (171 aa).

An N-terminal signal peptide occupies residues 1–22 (MYRKALLVWLLVYGIMRCTVHS). Positions 23–76 (SPTALKYPALRLEDEVYDEDGNTLPDFAFDNNPIGIGNPASVFDDMYSFYYPAE) are excised as a propeptide. Residues 145 to 153 (VKKYLAAVL) are important for receptor binding. The residue at position 164 (K164) is a Lysine amide. A propeptide spanning residues 168-171 (VAYL) is cleaved from the precursor.

The protein belongs to the glucagon family.

It localises to the secreted. Its function is as follows. Primary role of GRF is to release GH from the pituitary. In terms of biological role, PACAP is a neuropeptide involved in diverse array of physiological processes through activating the PACAP subfamily of class B1 G protein-coupled receptors: VIP receptor 1 (VIPR1), VIP receptor 2 (VIPR2), and PACAP type I receptor (ADCYAP1R1). Exerts neuroprotective and general cytoprotective effects due to anti-apoptotic, anti-inflammatory, and antioxidant actions. This Pelophylax ridibundus (Marsh frog) protein is Glucagon family neuropeptides (adcyap1).